Reading from the N-terminus, the 473-residue chain is Cell division protein FtsP (473 aa).

Residues 1-27 constitute a signal peptide (tat-type signal); that stretch reads MSFSRRQFIQVSGLAMCIGAAPLLVRA.

It belongs to the FtsP family. In terms of processing, predicted to be exported by the Tat system. The position of the signal peptide cleavage has not been experimentally proven.

It localises to the periplasm. Cell division protein that is required for growth during stress conditions. May be involved in protecting or stabilizing the divisomal assembly under conditions of stress. The chain is Cell division protein FtsP from Photorhabdus laumondii subsp. laumondii (strain DSM 15139 / CIP 105565 / TT01) (Photorhabdus luminescens subsp. laumondii).